We begin with the raw amino-acid sequence, 149 residues long: Calmodulin (149 aa).

Position 2 is an N-acetylalanine (A2). EF-hand domains are found at residues 8–43 (EQVS…LGQN), 44–79 (PSES…KMKD), 81–116 (DSEE…IGEK), and 117–149 (LTDD…MMQK). Residues D21, D23, D25, Q27, E32, D57, D59, N61, T63, E68, D94, D96, N98, E105, D130, D132, D134, R136, and E141 each coordinate Ca(2+).

It belongs to the calmodulin family.

Calmodulin mediates the control of a large number of enzymes, ion channels and other proteins by Ca(2+). Among the enzymes to be stimulated by the calmodulin-Ca(2+) complex are a number of protein kinases and phosphatases. In Emericella nidulans (strain FGSC A4 / ATCC 38163 / CBS 112.46 / NRRL 194 / M139) (Aspergillus nidulans), this protein is Calmodulin (camA).